The sequence spans 914 residues: Calcium-activated chloride channel regulator 1 (914 aa).

The signal sequence occupies residues 1 to 21 (MGPFKSSVFILILHLLEGALS). The tract at residues 46–199 (DETLIQQIKD…GITGTNVVKK (154 aa)) is metalloprotease domain. His156 contributes to the Zn(2+) binding site. The active site involves Glu157. Residues His160 and Asp167 each coordinate Zn(2+). Residues 306–475 (IVCLVLDKSG…NGLIDAFGAL (170 aa)) form the VWFA domain. Asn503, Asn585, Asn770, Asn804, Asn810, Asn831, Asn836, and Asn890 each carry an N-linked (GlcNAc...) asparagine glycan.

The protein belongs to the CLCR family. Post-translationally, glycosylated. The 125-kDa product is autoproteolytically processed by the metalloprotease domain and yields to two cell-surface-associated subunits, a 90-kDa protein and a group of 37- to 41-kDa proteins. The cleavage is necessary for calcium-activated chloride channel (CaCC) activation activity. Highly expressed in small intestine and colon namely in intestinal basal crypt epithelia and goblet cells, and appendix. Weakly expressed in uterus, testis and kidney. Expressed in the airways epithelium of both asthmatic and healthy patients. Expressed in the bronchial epithelium, especially in mucus-producing goblet cells. Expressed in normal turbinate mucosa and nasal polyp. Expressed in.

Its subcellular location is the secreted. It localises to the extracellular space. The protein localises to the cell membrane. May be involved in mediating calcium-activated chloride conductance. May play critical roles in goblet cell metaplasia, mucus hypersecretion, cystic fibrosis and AHR. May be involved in the regulation of mucus production and/or secretion by goblet cells. Involved in the regulation of tissue inflammation in the innate immune response. May play a role as a tumor suppressor. Induces MUC5AC. This chain is Calcium-activated chloride channel regulator 1 (CLCA1), found in Homo sapiens (Human).